We begin with the raw amino-acid sequence, 807 residues long: Phenylalanine--tRNA ligase beta subunit (807 aa).

The 118-residue stretch at 39-156 (AGEFSGVVIG…SDAPLGQCVR (118 aa)) folds into the tRNA-binding domain. In terms of domain architecture, B5 spans 409 to 488 (PQTKDVNLRR…RIFGYNNIPN (80 aa)). Mg(2+) contacts are provided by D466, D472, E475, and E476. An FDX-ACB domain is found at 713 to 806 (SRFPANRRDL…LKTELNASLR (94 aa)).

This sequence belongs to the phenylalanyl-tRNA synthetase beta subunit family. Type 1 subfamily. As to quaternary structure, tetramer of two alpha and two beta subunits. Requires Mg(2+) as cofactor.

It localises to the cytoplasm. The enzyme catalyses tRNA(Phe) + L-phenylalanine + ATP = L-phenylalanyl-tRNA(Phe) + AMP + diphosphate + H(+). This is Phenylalanine--tRNA ligase beta subunit from Colwellia psychrerythraea (strain 34H / ATCC BAA-681) (Vibrio psychroerythus).